Consider the following 213-residue polypeptide: High frequency lysogenization protein HflD homolog (213 aa).

This sequence belongs to the HflD family.

The protein resides in the cytoplasm. It localises to the cell inner membrane. The polypeptide is High frequency lysogenization protein HflD homolog (Alcanivorax borkumensis (strain ATCC 700651 / DSM 11573 / NCIMB 13689 / SK2)).